We begin with the raw amino-acid sequence, 127 residues long: uncharacterized protein (127 aa).

The span at 1 to 13 shows a compositional bias: polar residues; the sequence is MEAGNRSGTPQHR. Residues 1–26 are disordered; sequence MEAGNRSGTPQHRQLSEIRQDLSSSP.

This is an uncharacterized protein from Saccharomyces cerevisiae (strain ATCC 204508 / S288c) (Baker's yeast).